The following is a 1378-amino-acid chain: DNA-directed RNA polymerase subunit beta (1378 aa).

It belongs to the RNA polymerase beta chain family. In terms of assembly, the RNAP catalytic core consists of 2 alpha, 1 beta, 1 beta' and 1 omega subunit. When a sigma factor is associated with the core the holoenzyme is formed, which can initiate transcription.

It catalyses the reaction RNA(n) + a ribonucleoside 5'-triphosphate = RNA(n+1) + diphosphate. Functionally, DNA-dependent RNA polymerase catalyzes the transcription of DNA into RNA using the four ribonucleoside triphosphates as substrates. This chain is DNA-directed RNA polymerase subunit beta, found in Hyphomonas neptunium (strain ATCC 15444).